The chain runs to 682 residues: Potassium-transporting ATPase ATP-binding subunit (682 aa).

4 consecutive transmembrane segments (helical) span residues 35 to 55 (VMFVVWLGSVVTTLLAVAMAA), 62 to 82 (TGFTVAISVWLWFTVLFANFA), 219 to 239 (IALTILLLALTIVLLLATVTL), and 254 to 274 (VLVALLVCLIPTTIGGLLSAI). The 4-aspartylphosphate intermediate role is filled by D307. ATP contacts are provided by residues D344, E348, 377–384 (FSAQTRMS), and K395. 2 residues coordinate Mg(2+): D518 and D522. The next 3 membrane-spanning stretches (helical) occupy residues 577–597 (TFSIANDVAKYFAILPAAFAA), 616–636 (AILSAVIFNALVIVFLIPLAL), and 656–676 (IYGVGGLLVPFLGIKLIDMLL).

Belongs to the cation transport ATPase (P-type) (TC 3.A.3) family. Type IA subfamily. In terms of assembly, the system is composed of three essential subunits: KdpA, KdpB and KdpC.

It is found in the cell inner membrane. It carries out the reaction K(+)(out) + ATP + H2O = K(+)(in) + ADP + phosphate + H(+). Functionally, part of the high-affinity ATP-driven potassium transport (or Kdp) system, which catalyzes the hydrolysis of ATP coupled with the electrogenic transport of potassium into the cytoplasm. This subunit is responsible for energy coupling to the transport system and for the release of the potassium ions to the cytoplasm. This chain is Potassium-transporting ATPase ATP-binding subunit, found in Erwinia tasmaniensis (strain DSM 17950 / CFBP 7177 / CIP 109463 / NCPPB 4357 / Et1/99).